A 610-amino-acid chain; its full sequence is Terminase, large subunit (610 aa).

The interval 30-94 is ssDNA-binding; it reads RKDEDGIHWI…SRYMGLPNLK (65 aa). The tract at residues 131 to 301 is ATPase activity; that stretch reads DYGVIKVQLR…NHFYDIWTAA (171 aa). ATP contacts are provided by glutamine 138 and glutamine 143. Positions 161–167 match the Walker A motif motif; it reads SRQLGKT. Arginine 202 contributes to the ATP binding site. Positions 251–256 match the Walker B motif motif; that stretch reads MIYIDE. Catalysis depends on glutamate 256, which acts as the For ATPase activity. The ATPase coupling motif lies at 285-287; the sequence is TTT. The binding to the portal protein stretch occupies residues 328-352; it reads IFDDGWQWSIQTINGSSLAQFRQEH. The nuclease activity stretch occupies residues 360–559; it reads SGTLISGMKL…FGWLSTQSKF (200 aa). 3 residues coordinate Mg(2+): aspartate 401, glutamate 458, and aspartate 542.

This sequence belongs to the Tequatrovirus large terminase family. Interacts with the terminase small subunit; the active complex is composed of a pentamer of terminase large subunits and a dodecamer of terminase small subunits. Interacts with the portal protein. Interacts with the RNA polymerase sigma factor gp55. It depends on Mg(2+) as a cofactor. Phosphorylated.

With respect to regulation, stimulated up to 50 to 100-fold by the terminase small subunit. Modestly activated by portal protein and single-stranded binding protein gp32 multimers. In terms of biological role, the terminase large subunit acts as an ATP driven molecular motor necessary for viral DNA translocation into empty capsids and as an endonuclease that cuts the viral genome to initiate and to end a packaging reaction. The terminase lies at a unique vertex of the procapsid and is composed of two subunits, a small terminase subunit involved in viral DNA recognition (packaging sequence), and a large terminase subunit possessing endonucleolytic and ATPase activities. Both terminase subunits heterooligomerize and are docked on the portal protein to form the packaging machine. The terminase large subunit exhibits endonuclease activity and cleaves the viral genome concatemer once the capsid is full (headful packaging). Once the capsid is packaged with the DNA, the terminase complex is substituted by the tail. This is Terminase, large subunit (17) from Escherichia coli (Bacteriophage T4).